The sequence spans 303 residues: tRNA pseudouridine synthase B (303 aa).

The active-site Nucleophile is D38.

The protein belongs to the pseudouridine synthase TruB family. Type 1 subfamily.

It carries out the reaction uridine(55) in tRNA = pseudouridine(55) in tRNA. Functionally, responsible for synthesis of pseudouridine from uracil-55 in the psi GC loop of transfer RNAs. The chain is tRNA pseudouridine synthase B from Levilactobacillus brevis (strain ATCC 367 / BCRC 12310 / CIP 105137 / JCM 1170 / LMG 11437 / NCIMB 947 / NCTC 947) (Lactobacillus brevis).